The following is a 943-amino-acid chain: MTDYKATLNLPDTAFPMKAGLPQREPQILQRWDSIGLYGKLREIGKDRPKFVLHDGPPYANGTIHIGHALNKILKDMILRSKTLSGFDAPYVPGWDCHGLPIEHKVEVTYGKNLGADKTRELCRAYATEQIEGQKSEFIRLGVLGEWDNPYKTMNFKNEAGEIRALAEIVKGGFVFKGLKPVNWCFDCGSALAEAEVEYEDKKSSTIDVAFPVADDAKLAEAFGLASLSKPAAIVIWTTTPWTIPANQALNVHPEFTYALVDVGDRLLVLAEEMVEACLARYELQGSVIATTTGSALELINFRHPFYDRLSPVYLADYVELGAGTGIVHSAPAYGVDDFVTCKAYGMVNDDILNPVQSNGVYAPSLEFFGGQFIFKANDSIIDKLSEVGSLLHTETIKHSYMHCWRHKTPLIYRATAQWFIGMDKEPTSGDTLRVRSLKAIEDTQFVPAWGQARLHSMIANRPDWCISRQRNWGVPIPFFLNKESGELHPRTVELMEEVAQRVELEGIEAWFKMDAAELLGDEAPQYDKISDTLDVWFDSGTTHWHVLRGSHPMGHETGPRADLYLEGSDQHRGWFHSSLLTGCAIDNHAPYRELLTHGFTVDETGRKMSKSLKNVIEPKKINDTLGADIMRLWVASTDYSGEIAVSDQILARSADAYRRIRNTARFLLSNLTGFNPATDILPAEDMLALDRWAVDRTLLLQRELQENYGEYRFWNVYSKIHNFCVQELGGFYLDIIKDRQYTTGANSKARRSAQTALYHISEALVRWIAPILAFTADELWEYLPGERNESVMLNTWYEGLTELPADFELGREYWEGVMAVKVAVNKELEVQRAAKAVGGNLQAEVTLFAEAGLTADLAKLSNELRFVLITSTASLAPFAQAPADAVATEVPGLKLKVVKSAFPKCARCWHCREDVGVNPEHPEICGRCVDNISGAGEVRHYA.

The 'HIGH' region signature appears at 58 to 68 (PYANGTIHIGH). Residue Glu-567 coordinates L-isoleucyl-5'-AMP. A 'KMSKS' region motif is present at residues 608–612 (KMSKS). An ATP-binding site is contributed by Lys-611. The Zn(2+) site is built by Cys-906, Cys-909, Cys-926, and Cys-929.

This sequence belongs to the class-I aminoacyl-tRNA synthetase family. IleS type 1 subfamily. As to quaternary structure, monomer. The cofactor is Zn(2+).

It localises to the cytoplasm. It catalyses the reaction tRNA(Ile) + L-isoleucine + ATP = L-isoleucyl-tRNA(Ile) + AMP + diphosphate. Catalyzes the attachment of isoleucine to tRNA(Ile). As IleRS can inadvertently accommodate and process structurally similar amino acids such as valine, to avoid such errors it has two additional distinct tRNA(Ile)-dependent editing activities. One activity is designated as 'pretransfer' editing and involves the hydrolysis of activated Val-AMP. The other activity is designated 'posttransfer' editing and involves deacylation of mischarged Val-tRNA(Ile). In Pseudomonas fluorescens (strain SBW25), this protein is Isoleucine--tRNA ligase.